The following is a 3142-amino-acid chain: MATLEKLMKAFESLKSFQQQQQQQQQQQQQQQQQQQQQPPPPPPPPPPPQLPQPPPQAQPLLPQPQPPPPPPPPPPGPAVAEEPLHRPKKELSATKKDRVNHCLTICENIVAQSVRNSPEFQKLLGIAMELFLLCSDDAESDVRMVADECLNKVIKALMDSNLPRLQLELYKEIKKNGAPRSLRAALWRFAELAHLVRPQKCRPYLVNLLPCLTRTSKRPEESVQETLAAAVPKIMASFGNFANDNEIKVLLKAFIANLKSSSPTIRRTAAGSAVSICQHSRRTQYFYSWLLNVLLGLLVPVEDEHSTLLILGVLLTLRYLVPLLQQQVKDTSLKGSFGVTRKEMEVSPSAEQLVQVYELTLHHTQHQDHNVVTGALELLQQLFRTPPPELLQTLTAVGGIGQLTAAKEESGGRSRSGSIVELIAGGGSSCSPVLSRKQKGKVLLGEEEALEDDSESRSDVSSSALTASVKDEISGELAASSGVSTPGSAGHDIITEQPRSQHTLQADSVDLASCDLTSSATDGDEEDILSHSSSQVSAVPSDPAMDLNDGTQASSPISDSSQTTTEGPDSAVTPSDSSEIVLDGTDNQYLGLQIGQPQDEDEEATGILPDEASEAFRNSSMALQQAHLLKNMSHCRQPSDSSVDKFVLRDEATEPGDQENKPCRIKGDIGQSTDDDSAPLVHCVRLLSASFLLTGGKNVLVPDRDVRVSVKALALSCVGAAVALHPESFFSKLYKVPLDTTEYPEEQYVSDILNYIDHGDPQVRGATAILCGTLICSILSRSRFHVGDWMGTIRTLTGNTFSLADCIPLLRKTLKDESSVTCKLACTAVRNCVMSLCSSSYSELGLQLIIDVLTLRNSSYWLVRTELLETLAEIDFRLVSFLEAKAENLHRGAHHYTGLLKLQERVLNNVVIHLLGDEDPRVRHVAAASLIRLVPKLFYKCDQGQADPVVAVARDQSSVYLKLLMHETQPPSHFSVSTITRIYRGYNLLPSITDVTMENNLSRVIAAVSHELITSTTRALTFGCCEALCLLSTAFPVCIWSLGWHCGVPPLSASDESRKSCTVGMATMILTLLSSAWFPLDLSAHQDALILAGNLLAASAPKSLRSSWASEEEANPAATKQEEVWPALGDRALVPMVEQLFSHLLKVINICAHVLDDVAPGPAIKAALPSLTNPPSLSPIRRKGKEKEPGEQASVPLSPKKGSEASAASRQSDTSGPVTTSKSSSLGSFYHLPSYLKLHDVLKATHANYKVTLDLQNSTEKFGGFLRSALDVLSQILELATLQDIGKCVEEILGYLKSCFSREPMMATVCVQQLLKTLFGTNLASQFDGLSSNPSKSQGRAQRLGSSSVRPGLYHYCFMAPYTHFTQALADASLRNMVQAEQENDTSGWFDVLQKVSTQLKTNLTSVTKNRADKNAIHNHIRLFEPLVIKALKQYTTTTCVQLQKQVLDLLAQLVQLRVNYCLLDSDQVFIGFVLKQFEYIEVGQFRESEAIIPNIFFFLVLLSYERYHSKQIIGIPKIIQLCDGIMASGRKAVTHAIPALQPIVHDLFVLRGTNKADAGKELETQKEVVVSMLLRLIQYHQVLEMFILVLQQCHKENEDKWKRLSRQIADIILPMLAKQQMHIDSHEALGVLNTLFEILAPSSLRPVDMLLRSMFVTPNTMASVSTVQLWISGILAILRVLISQSTEDIVLSRIQELSFSPYLISCTVINRLRDGDSTSTLEEHSEGKQIKNLPEETFSRFLLQLVGILLEDIVTKQLKVEMSEQQHTFYCQELGTLLMCLIHIFKSGMFRRITAAATRLFRSDGCGGSFYTLDSLNLRARSMITTHPALVLLWCQILLLVNHTDYRWWAEVQQTPKRHSLSSTKLLSPQMSGEEEDSDLAAKLGMCNREIVRRGALILFCDYVCQNLHDSEHLTWLIVNHIQDLISLSHEPPVQDFISAVHRNSAASGLFIQAIQSRCENLSTPTMLKKTLQCLEGIHLSQSGAVLTLYVDRLLCTPFRVLARMVDILACRRVEMLLAANLQSSMAQLPMEELNRIQEYLQSSGLAQRHQRLYSLLDRFRLSTMQDSLSPSPPVSSHPLDGDGHVSLETVSPDKDWYVHLVKSQCWTRSDSALLEGAELVNRIPAEDMNAFMMNSEFNLSLLAPCLSLGMSEISGGQKSALFEAAREVTLARVSGTVQQLPAVHHVFQPELPAEPAAYWSKLNDLFGDAALYQSLPTLARALAQYLVVVSKLPSHLHLPPEKEKDIVKFVVATLEALSWHLIHEQIPLSLDLQAGLDCCCLALQLPGLWSVVSSTEFVTHACSLIYCVHFILEAVAVQPGEQLLSPERRTNTPKAISEEEEEVDPNTQNPKYITAACEMVAEMVESLQSVLALGHKRNSGVPAFLTPLLRNIIISLARLPLVNSYTRVPPLVWKLGWSPKPGGDFGTAFPEIPVEFLQEKEVFKEFIYRINTLGWTSRTQFEETWATLLGVLVTQPLVMEQEESPPEEDTERTQINVLAVQAITSLVLSAMTVPVAGNPAVSCLEQQPRNKPLKALDTRFGRKLSIIRGIVEQEIQAMVSKRENIATHHLYQAWDPVPSLSPATTGALISHEKLLLQINPERELGSMSYKLGQVSIHSVWLGNSITPLREEEWDEEEEEEADAPAPSSPPTSPVNSRKHRAGVDIHSCSQFLLELYSRWILPSSSARRTPAILISEVVRSLLVVSDLFTERNQFELMYVTLTELRRVHPSEDEILAQYLVPATCKAAAVLGMDKAVAEPVSRLLESTLRSSHLPSRVGALHGVLYVLECDLLDDTAKQLIPVISDYLLSNLKGIAHCVNIHSQQHVLVMCATAFYLIENYPLDVGPEFSASIIQMCGVMLSGSEESTPSIIYHCALRGLERLLLSEQLSRLDAESLVKLSVDRVNVHSPHRAMAALGLMLTCMYTGKEKVSPGRTSDPNPAAPDSESVIVAMERVSVLFDRIRKGFPCEARVVARILPQFLDDFFPPQDIMNKVIGEFLSNQQPYPQFMATVVYKVFQTLHSTGQSSMVRDWVMLSLSNFTQRAPVAMATWSLSCFFVSASTSPWVAAILPHVISRMGKLEQVDVNLFCLVATDFYRHQIEEELDRRAFQSVLEVVAAPGSPYHRLLTCLRNVHKVTTC.

Residues 3–13 (TLEKLMKAFES) are sufficient for interaction with TPR. An N6-acetyllysine modification is found at Lys9. A disordered region spans residues 14-85 (LKSFQQQQQQ…PGPAVAEEPL (72 aa)). Low complexity predominate over residues 18–37 (QQQQQQQQQQQQQQQQQQQQ). A compositionally biased stretch (pro residues) spans 38-78 (QPPPPPPPPPPPQLPQPPPQAQPLLPQPQPPPPPPPPPPGP). An N6-acetyllysine mark is found at Lys176 and Lys234. HEAT repeat units lie at residues 204–241 (PYLV…SFGN), 246–283 (NEIK…HSRR), and 316–360 (LTLR…VYEL). Lys343 bears the N6-acetyllysine mark. Residues Ser411, Ser417, Ser419, and Ser432 each carry the phosphoserine modification. N6-acetyllysine is present on Lys442. Positions 447–469 (EEEALEDDSESRSDVSSSALTAS) are disordered. The interaction with ZDHHC17 stretch occupies residues 491–502 (GHDIITEQPRSQ). The tract at residues 517–583 (LTSSATDGDE…TPSDSSEIVL (67 aa)) is disordered. The span at 531–545 (SHSSSQVSAVPSDPA) shows a compositional bias: low complexity. Polar residues predominate over residues 550-579 (DGTQASSPISDSSQTTTEGPDSAVTPSDSS). Gly551 carries the N-myristoyl glycine lipid modification. Phosphoserine occurs at positions 640 and 643. HEAT repeat units lie at residues 802–839 (FSLA…SLCS) and 902–940 (KLQE…KLFY). Positions 1176–1225 (PSLSPIRRKGKEKEPGEQASVPLSPKKGSEASAASRQSDTSGPVTTSKSS) are disordered. Phosphoserine; by CDK5 occurs at positions 1179 and 1199. Polar residues predominate over residues 1207 to 1225 (SAASRQSDTSGPVTTSKSS). Ser1870 and Ser1874 each carry phosphoserine. Residues 2330-2351 (ERRTNTPKAISEEEEEVDPNTQ) form a disordered region. The Nuclear export signal motif lies at 2395 to 2404 (IIISLARLPL). A disordered region spans residues 2633–2662 (EEEWDEEEEEEADAPAPSSPPTSPVNSRKH). Residues 2634 to 2645 (EEWDEEEEEEAD) are compositionally biased toward acidic residues.

It belongs to the huntingtin family. As to quaternary structure, interacts with PFN1. Interacts through its N-terminus with PRPF40A. Interacts with PQBP1. Interacts with SETD2. Interacts with SH3GLB1. Interacts with SYVN. Interacts with TPR; the interaction is inhibited by forms of Huntingtin with expanded polyglutamine stretch. Interacts with ZDHHC13 (via ANK repeats). Interacts with ZDHHC17 (via ANK repeats). Interacts with F8A1/F8A2/F8A3. Found in a complex with F8A1/F8A2/F8A3, HTT and RAB5A; mediates the recruitment of HTT by RAB5A. In terms of processing, cleaved by caspases downstream of the polyglutamine stretch. The resulting N-terminal fragments are cytotoxic and provokes apoptosis. Forms with expanded polyglutamine expansion are specifically ubiquitinated by SYVN1, which promotes their proteasomal degradation. Post-translationally, phosphorylation at Ser-1179 and Ser-1199 by CDK5 in response to DNA damage in nuclei of neurons protects neurons against polyglutamine expansion as well as DNA damage mediated toxicity. In terms of processing, myristoylated at Gly-551, following proteolytic cleavage at Asp-550. As to expression, expressed in the brain cortex (at protein level). Widely expressed with the highest level of expression in the brain (nerve fibers, varicosities, and nerve endings). In the brain, the regions where it can be mainly found are the cerebellar cortex, the neocortex, the striatum, and the hippocampal formation.

The protein resides in the cytoplasm. It is found in the nucleus. It localises to the early endosome. Its subcellular location is the cytoplasmic vesicle. The protein localises to the autophagosome. May play a role in microtubule-mediated transport or vesicle function. Functionally, promotes the formation of autophagic vesicles. This is Huntingtin (HTT) from Homo sapiens (Human).